Reading from the N-terminus, the 170-residue chain is Co-chaperone protein HscB homolog (170 aa).

Residues 5 to 79 (DHFSLFGLPA…RARYLCEQAG (75 aa)) enclose the J domain.

It belongs to the HscB family. Interacts with HscA and stimulates its ATPase activity.

In terms of biological role, co-chaperone involved in the maturation of iron-sulfur cluster-containing proteins. Seems to help targeting proteins to be folded toward HscA. This is Co-chaperone protein HscB homolog from Bordetella parapertussis (strain 12822 / ATCC BAA-587 / NCTC 13253).